The sequence spans 118 residues: Large ribosomal subunit protein uL18 (118 aa).

Belongs to the universal ribosomal protein uL18 family. In terms of assembly, part of the 50S ribosomal subunit; part of the 5S rRNA/L5/L18/L25 subcomplex. Contacts the 5S and 23S rRNAs.

Functionally, this is one of the proteins that bind and probably mediate the attachment of the 5S RNA into the large ribosomal subunit, where it forms part of the central protuberance. This is Large ribosomal subunit protein uL18 from Wolinella succinogenes (strain ATCC 29543 / DSM 1740 / CCUG 13145 / JCM 31913 / LMG 7466 / NCTC 11488 / FDC 602W) (Vibrio succinogenes).